Consider the following 365-residue polypeptide: Elongation factor Tu (365 aa).

Residues 1–7 (HVDHGKT), 62–66 (DCPGH), and 117–120 (NKCD) contribute to the GTP site. One can recognise a tr-type G domain in the interval 1-185 (HVDHGKTTLT…TLDSYIPTPE (185 aa)). Position 7 (threonine 7) interacts with Mg(2+).

The protein belongs to the TRAFAC class translation factor GTPase superfamily. Classic translation factor GTPase family. EF-Tu/EF-1A subfamily. Monomer.

Its subcellular location is the cytoplasm. It carries out the reaction GTP + H2O = GDP + phosphate + H(+). Functionally, GTP hydrolase that promotes the GTP-dependent binding of aminoacyl-tRNA to the A-site of ribosomes during protein biosynthesis. This is Elongation factor Tu from Buchnera aphidicola subsp. Schlechtendalia chinensis.